We begin with the raw amino-acid sequence, 511 residues long: Bifunctional purine biosynthesis protein PurH (511 aa).

Residues 1–144 (MKTALLSVSD…KNFASVLPVV (144 aa)) form the MGS-like domain.

This sequence belongs to the PurH family.

The enzyme catalyses (6R)-10-formyltetrahydrofolate + 5-amino-1-(5-phospho-beta-D-ribosyl)imidazole-4-carboxamide = 5-formamido-1-(5-phospho-D-ribosyl)imidazole-4-carboxamide + (6S)-5,6,7,8-tetrahydrofolate. The catalysed reaction is IMP + H2O = 5-formamido-1-(5-phospho-D-ribosyl)imidazole-4-carboxamide. It participates in purine metabolism; IMP biosynthesis via de novo pathway; 5-formamido-1-(5-phospho-D-ribosyl)imidazole-4-carboxamide from 5-amino-1-(5-phospho-D-ribosyl)imidazole-4-carboxamide (10-formyl THF route): step 1/1. The protein operates within purine metabolism; IMP biosynthesis via de novo pathway; IMP from 5-formamido-1-(5-phospho-D-ribosyl)imidazole-4-carboxamide: step 1/1. The protein is Bifunctional purine biosynthesis protein PurH of Pediococcus pentosaceus (strain ATCC 25745 / CCUG 21536 / LMG 10740 / 183-1w).